A 499-amino-acid chain; its full sequence is Putative protease Do-like 12, mitochondrial (499 aa).

Residues 1 to 24 (MLFRSCVGMVSRYSRALLPTITIS) constitute a mitochondrion transit peptide. A serine protease region spans residues 94–259 (GGSGFAIAGK…IPTPIIRHFI (166 aa)). Catalysis depends on charge relay system residues histidine 110, aspartate 144, and serine 222. A PDZ domain is found at 272 to 356 (GSLVLSCQSM…DENILVKVLR (85 aa)).

It belongs to the peptidase S1C family.

It localises to the mitochondrion matrix. Functionally, putative serine protease. The chain is Putative protease Do-like 12, mitochondrial (DEGP12) from Arabidopsis thaliana (Mouse-ear cress).